The following is a 129-amino-acid chain: Natriuretic peptides B (129 aa).

A signal peptide spans 1-26 (MDPQTALSRALLLLLFLHLSLLGCRS). A disulfide bond links Cys107 and Cys123.

Belongs to the natriuretic peptide family. The precursor molecule is proteolytically cleaved, possibly by FURIN or CORIN, to produce the active peptide. May undergo further proteolytic cleavage by various proteases such as DPP4, MME and possibly FAP, to give rise to a variety of shorter peptides. May be cleaved at Pro-99 by the prolyl endopeptidase FAP (seprase) activity (in vitro). May be degraded by IDE. During IDE degradation, the resulting products initially increase the activation of NPR1 and can also stimulate NPR2 to produce cGMP before the fragments are completely degraded and inactivated by IDE (in vitro).

The protein resides in the secreted. Cardiac hormone that plays a key role in mediating cardio-renal homeostasis. May also function as a paracrine antifibrotic factor in the heart. Acts by specifically binding and stimulating NPR1 to produce cGMP, which in turn activates effector proteins that drive various biological responses. Involved in regulating the extracellular fluid volume and maintaining the fluid-electrolyte balance through natriuresis, diuresis, vasorelaxation, and inhibition of renin and aldosterone secretion. Binds the clearance receptor NPR3. The protein is Natriuretic peptides B (NPPB) of Bos taurus (Bovine).